Consider the following 732-residue polypeptide: Cullin-3B (732 aa).

The Cullin neddylation domain maps to 662–724 (DRKPQIEAAI…RDFLERDNTD (63 aa)). K676 is covalently cross-linked (Glycyl lysine isopeptide (Lys-Gly) (interchain with G-Cter in NEDD8)).

The protein belongs to the cullin family. Interacts with BTB/POZ-MATH proteins BPM1 and BPM3. In terms of processing, neddylated. Deneddylated via its interaction with the COP9 signalosome (CSN) complex.

The protein operates within protein modification; protein ubiquitination. In terms of biological role, component of the cullin-RING ubiquitin ligases (CRL), or CUL3-RBX1-BTB protein E3 ligase complexes which mediate the ubiquitination and subsequent proteasomal degradation of target proteins. The functional specificity of the CRL complex depends on the BTB domain-containing protein as the substrate recognition component. Involved in embryo pattern formation and endosperm development. Required for the normal division and organization of the root stem cells and columella root cap cells. Regulates primary root growth by an unknown pathway, but in an ethylene-dependent manner. Functions in distal root patterning, by an ethylene-independent mechanism. Functionally redundant with CUL3A. The polypeptide is Cullin-3B (CUL3B) (Arabidopsis thaliana (Mouse-ear cress)).